A 390-amino-acid polypeptide reads, in one-letter code: Large ribosomal subunit protein uL3y (390 aa).

The interval 1 to 36 (MSHRKFEHPRHGSLGFLPRKRASRHRGKVKAFPKDD) is disordered. The span at 18 to 31 (PRKRASRHRGKVKA) shows a compositional bias: basic residues.

It belongs to the universal ribosomal protein uL3 family.

The protein resides in the cytoplasm. The sequence is that of Large ribosomal subunit protein uL3y (ARP2) from Arabidopsis thaliana (Mouse-ear cress).